Reading from the N-terminus, the 700-residue chain is MEPLCPLLLVGFSLPLARALRGNETTADSNETTTTSGPPDPGASQPLLAWLLLPLLLLLLVLLLAAYFFRFRKQRKAVVSTSDKKMPNGILEEQEQQRVMLLSRSPSGPKKYFPIPVEHLEEEIRIRSADDCKQFREEFNSLPSGHIQGTFELANKEENREKNRYPNILPNDHSRVILSQLDGIPCSDYINASYIDGYKEKNKFIAAQGPKQETVNDFWRMVWEQKSATIVMLTNLKERKEEKCHQYWPDQGCWTYGNIRVCVEDCVVLVDYTIRKFCIQPQLPDGCKAPRLVSQLHFTSWPDFGVPFTPIGMLKFLKKVKTLNPVHAGPIVVHCSAGVGRTGTFIVIDAMMAMMHAEQKVDVFEFVSRIRNQRPQMVQTDMQYTFIYQALLEYYLYGDTELDVSSLEKHLQTMHGTTTHFDKIGLEEEFRKLTNVRIMKENMRTGNLPANMKKARVIQIIPYDFNRVILSMKRGQEYTDYINASFIDGYRQKDYFIATQGPLAHTVEDFWRMIWEWKSHTIVMLTEVQEREQDKCYQYWPTEGSVTHGEITIEIKNDTLSEAISIRDFLVTLNQPQARQEEQVRVVRQFHFHGWPEIGIPAEGKGMIDLIAAVQKQQQQTGNHPITVHCSAGAGRTGTFIALSNILERVKAEGLLDVFQAVKSLRLQRPHMVQTLEQYEFCYKVVQDFIDIFSDYANFK.

An N-terminal signal peptide occupies residues 1–19; that stretch reads MEPLCPLLLVGFSLPLARA. At 20–46 the chain is on the extracellular side; sequence LRGNETTADSNETTTTSGPPDPGASQP. N-linked (GlcNAc...) asparagine glycans are attached at residues Asn23 and Asn30. The chain crosses the membrane as a helical span at residues 47–69; the sequence is LLAWLLLPLLLLLLVLLLAAYFF. Over 70–700 the chain is Cytoplasmic; the sequence is RFRKQRKAVV…DIFSDYANFK (631 aa). Tyrosine-protein phosphatase domains are found at residues 135–394 and 426–689; these read FREE…LLEY and LEEE…VQDF. Substrate is bound by residues Asp303, 335-341, and Gln379; that span reads CSAGVGR. Residue Cys335 is the Phosphocysteine intermediate of the active site. Cys630 (phosphocysteine intermediate) is an active-site residue. At Tyr696 the chain carries Phosphotyrosine.

This sequence belongs to the protein-tyrosine phosphatase family. Receptor class 4 subfamily. In terms of assembly, monomer. Isoform 2: Homodimer. Can form oligomers. Dimerization is increased by oxidative stress and decreased by EGFR. Isoform 2 interacts with GRB2. Post-translationally, a catalytically active cytoplasmic form (p65) is produced by proteolytic cleavage of either isoform 1, isoform 2 or isoform 3. Isoform 1 and isoform 2 are phosphorylated on tyrosine residues by tyrosine kinase Neu. In terms of processing, isoform 1 is glycosylated. As to expression, expressed in giant cell tumor (osteoclastoma rich in multinucleated osteoclastic cells).

The protein localises to the cell membrane. It localises to the cytoplasm. It catalyses the reaction O-phospho-L-tyrosyl-[protein] + H2O = L-tyrosyl-[protein] + phosphate. In terms of biological role, isoform 1 plays a critical role in signaling transduction pathways and phosphoprotein network topology in red blood cells. May play a role in osteoclast formation and function. Isoform 2 acts as a negative regulator of insulin receptor (IR) signaling in skeletal muscle. Regulates insulin-induced tyrosine phosphorylation of insulin receptor (IR) and insulin receptor substrate 1 (IRS-1), phosphorylation of protein kinase B and glycogen synthase kinase-3 and insulin induced stimulation of glucose uptake. Functionally, isoform 1 and isoform 2 act as a negative regulator of FceRI-mediated signal transduction leading to cytokine production and degranulation, most likely by acting at the level of SYK to affect downstream events such as phosphorylation of SLP76 and LAT and mobilization of Ca(2+). The sequence is that of Receptor-type tyrosine-protein phosphatase epsilon (PTPRE) from Homo sapiens (Human).